A 389-amino-acid chain; its full sequence is Chalcone synthase 5 (389 aa).

Residue Cys164 is part of the active site.

It belongs to the thiolase-like superfamily. Chalcone/stilbene synthases family.

It carries out the reaction (E)-4-coumaroyl-CoA + 3 malonyl-CoA + 3 H(+) = 2',4,4',6'-tetrahydroxychalcone + 3 CO2 + 4 CoA. Its pathway is secondary metabolite biosynthesis; flavonoid biosynthesis. Its function is as follows. The primary product of this enzyme is 4,2',4',6'-tetrahydroxychalcone (also termed naringenin-chalcone or chalcone) which can under specific conditions spontaneously isomerize into naringenin. The protein is Chalcone synthase 5 (CHS5) of Trifolium subterraneum (Subterranean clover).